We begin with the raw amino-acid sequence, 210 residues long: Mating-type-like protein A1 (210 aa).

The segment at residues 141–200 is a DNA-binding region (homeobox); that stretch reads SKKKRQRLDNSTKEFLEKVFEKNKQPNRRERELIAEKHGVSLSQIRVWFTNKRMRKKEPK.

Belongs to the MATA1 family. In terms of assembly, forms a heterodimer with ALPHA2.

It localises to the nucleus. Functionally, mating type proteins are sequence specific DNA-binding proteins that act as master switches in yeast differentiation by controlling gene expression in a cell type-specific fashion. Transcriptional corepressor that acts in conjunction with ALPHA2 to repress transcription both of homozygote-specific genes and of genes necessary for the white-opaque switch, a prerequisite for mating. The chain is Mating-type-like protein A1 (MTLA1) from Candida albicans (strain SC5314 / ATCC MYA-2876) (Yeast).